A 348-amino-acid chain; its full sequence is MSRFWSPFVKDLVPYVPGEQPKLARLVKLNTNENPYGPSPKALEAMQGELNDNLRLYPDPNSDRLKQAVAEYYGVTPAQVFVGNGSDEVLAHIFHGLFQHDRGPLLFPDVSYSFYPVYCGLYGIAFEQVELDEQFQIQVSDYSKPNAGIIFPNPNAPTGCLLPLEAVEQLLQANRDSVVVVDEAYIDFGGETAISLVDRYDNLLVTQTLSKSRSLAGLRVGLAVGHPDLIEALERIKNSFNSYPLDRMAIVGAAVAFEDREYFDETCRKVIDSREVLVEALTARGFEVLPSAANFIFARHPSQDAAGIAARLREQGVIVRHFKQGRIAQFLRITIGTPEMNQALLDAL.

Position 211 is an N6-(pyridoxal phosphate)lysine (Lys211).

This sequence belongs to the class-II pyridoxal-phosphate-dependent aminotransferase family. Histidinol-phosphate aminotransferase subfamily. As to quaternary structure, homodimer. Pyridoxal 5'-phosphate is required as a cofactor.

It carries out the reaction L-histidinol phosphate + 2-oxoglutarate = 3-(imidazol-4-yl)-2-oxopropyl phosphate + L-glutamate. It functions in the pathway amino-acid biosynthesis; L-histidine biosynthesis; L-histidine from 5-phospho-alpha-D-ribose 1-diphosphate: step 7/9. This chain is Histidinol-phosphate aminotransferase, found in Pseudomonas entomophila (strain L48).